The sequence spans 343 residues: Small ribosomal subunit biogenesis GTPase RsgA (343 aa).

One can recognise a CP-type G domain in the interval 116 to 275 (HGQLKPVAAN…LIDSPGIREF (160 aa)). Residues 163–166 (NKAD) and 217–225 (GQSGVGKSS) contribute to the GTP site. Positions 299, 304, 306, and 312 each coordinate Zn(2+).

The protein belongs to the TRAFAC class YlqF/YawG GTPase family. RsgA subfamily. As to quaternary structure, monomer. Associates with 30S ribosomal subunit, binds 16S rRNA. Requires Zn(2+) as cofactor.

It localises to the cytoplasm. One of several proteins that assist in the late maturation steps of the functional core of the 30S ribosomal subunit. Helps release RbfA from mature subunits. May play a role in the assembly of ribosomal proteins into the subunit. Circularly permuted GTPase that catalyzes slow GTP hydrolysis, GTPase activity is stimulated by the 30S ribosomal subunit. This Pseudomonas putida (strain ATCC 700007 / DSM 6899 / JCM 31910 / BCRC 17059 / LMG 24140 / F1) protein is Small ribosomal subunit biogenesis GTPase RsgA.